The sequence spans 450 residues: UDP-N-acetylmuramoylalanine--D-glutamate ligase (450 aa).

119–125 lines the ATP pocket; sequence GSNGKTT.

It belongs to the MurCDEF family.

The protein localises to the cytoplasm. The enzyme catalyses UDP-N-acetyl-alpha-D-muramoyl-L-alanine + D-glutamate + ATP = UDP-N-acetyl-alpha-D-muramoyl-L-alanyl-D-glutamate + ADP + phosphate + H(+). It participates in cell wall biogenesis; peptidoglycan biosynthesis. In terms of biological role, cell wall formation. Catalyzes the addition of glutamate to the nucleotide precursor UDP-N-acetylmuramoyl-L-alanine (UMA). The sequence is that of UDP-N-acetylmuramoylalanine--D-glutamate ligase from Bacillus cereus (strain ATCC 10987 / NRS 248).